The sequence spans 314 residues: DNA-directed RNA polymerase subunit alpha (314 aa).

The interval 1-228 is alpha N-terminal domain (alpha-NTD); sequence MIEIEKPVIE…EHLNIFVGLT (228 aa). The alpha C-terminal domain (alpha-CTD) stretch occupies residues 245-314; sequence KEKVLEMTIE…ELGLGLRKEE (70 aa).

This sequence belongs to the RNA polymerase alpha chain family. In terms of assembly, homodimer. The RNAP catalytic core consists of 2 alpha, 1 beta, 1 beta' and 1 omega subunit. When a sigma factor is associated with the core the holoenzyme is formed, which can initiate transcription.

It carries out the reaction RNA(n) + a ribonucleoside 5'-triphosphate = RNA(n+1) + diphosphate. Functionally, DNA-dependent RNA polymerase catalyzes the transcription of DNA into RNA using the four ribonucleoside triphosphates as substrates. This Halalkalibacterium halodurans (strain ATCC BAA-125 / DSM 18197 / FERM 7344 / JCM 9153 / C-125) (Bacillus halodurans) protein is DNA-directed RNA polymerase subunit alpha.